We begin with the raw amino-acid sequence, 206 residues long: Ribosomal RNA small subunit methyltransferase G (206 aa).

S-adenosyl-L-methionine is bound by residues Gly74, Leu79, 125-126, and Arg140; that span reads VE.

The protein belongs to the methyltransferase superfamily. RNA methyltransferase RsmG family.

It localises to the cytoplasm. The enzyme catalyses guanosine(527) in 16S rRNA + S-adenosyl-L-methionine = N(7)-methylguanosine(527) in 16S rRNA + S-adenosyl-L-homocysteine. In terms of biological role, specifically methylates the N7 position of guanine in position 527 of 16S rRNA. The chain is Ribosomal RNA small subunit methyltransferase G from Shewanella sp. (strain MR-7).